Here is a 1036-residue protein sequence, read N- to C-terminus: ADAMTS-like protein 4 (1036 aa).

The N-terminal stretch at 1-24 (MESWLGRLWLCMMLLLPLPQPCQD) is a signal peptide. The TSP type-1 1 domain occupies 47–91 (GPWGRWASCSQPCGVGVQRRSRTCELHPALPLPPRPPRHPEAHRP). 2 disordered regions span residues 73-149 (HPAL…IKPG) and 163-308 (HRSR…WLPL). Over residues 163-173 (HRSRRHPHRPG) the composition is skewed to basic residues. Positions 215–253 (TPRSGTAQTEVLPRTSSAPSYTGTPAPTSSFGDSRSFQG) are enriched in polar residues. Residues asparagine 454 and asparagine 737 are each glycosylated (N-linked (GlcNAc...) asparagine). TSP type-1 domains are found at residues 687–748 (CPPY…HLCG), 750–804 (WEIS…DMGP), 805–871 (CTTA…GPCE), 872–931 (RTWR…QGQA), and 932–988 (CEDK…QPCN). A PLAC domain is found at 991-1028 (PDDQCKDSSPHCPLVVQARLCVYPYYTTTCCRSCAHVL).

Interacts with CTSB. Interacts with FBN1. In terms of processing, glycosylated. Can be O-fucosylated by POFUT2 on a serine or a threonine residue found within the consensus sequence C1-X(2)-(S/T)-C2-G of the TSP type-1 repeat domains where C1 and C2 are the first and second cysteine residue of the repeat, respectively. Fucosylated repeats can then be further glycosylated by the addition of a beta-1,3-glucose residue by the glucosyltransferase, B3GALTL. Fucosylation mediates the efficient secretion of ADAMTS family members. Can also be C-glycosylated with one or two mannose molecules on tryptophan residues within the consensus sequence W-X-X-W of the TPRs, and N-glycosylated. These other glycosylations can also facilitate secretion. As to expression, widely expressed in a range of tissues. Especially prevalent in brain, spinal cord, muscle, lung and heart.

It is found in the secreted. The protein localises to the extracellular space. Its subcellular location is the extracellular matrix. Positive regulation of apoptosis. May facilitate FBN1 microfibril biogenesis. The polypeptide is ADAMTS-like protein 4 (Mus musculus (Mouse)).